We begin with the raw amino-acid sequence, 308 residues long: HTH-type transcriptional regulator YtlI (308 aa).

The HTH lysR-type domain occupies 1–57; the sequence is MELRSIKTFHTIVKFGSFYKAAEILNYSQPTISMRMKQLEQDLGVLLFERGKSLQLT. The H-T-H motif DNA-binding region spans 18–37; the sequence is FYKAAEILNYSQPTISMRMK.

This sequence belongs to the LysR transcriptional regulatory family.

Its function is as follows. Positively regulates the expression of ytmI operon in response to the availability of sulfur sources. The protein is HTH-type transcriptional regulator YtlI (ytlI) of Bacillus subtilis (strain 168).